The sequence spans 206 residues: Large ribosomal subunit protein uL13 (206 aa).

The protein belongs to the universal ribosomal protein uL13 family.

The polypeptide is Large ribosomal subunit protein uL13 (RPL13A) (Picea mariana (Black spruce)).